Consider the following 536-residue polypeptide: Protein ST7 homolog (536 aa).

2 helical membrane passes run 3–23 (CSWT…LFFL) and 49–69 (FYVA…IFEW). A coiled-coil region spans residues 192–219 (AEEDTETVAQAENVLRRALRAIENTLST). A helical transmembrane segment spans residues 464-484 (STLGMLIQTFACLAICILAVL).

This sequence belongs to the ST7 family.

It localises to the membrane. In Caenorhabditis briggsae, this protein is Protein ST7 homolog.